A 131-amino-acid chain; its full sequence is UPF0102 protein Ent638_3585 (131 aa).

The interval 1–20 (MAQIPAGADRPGKLSRKQTG) is disordered.

Belongs to the UPF0102 family.

The protein is UPF0102 protein Ent638_3585 of Enterobacter sp. (strain 638).